Consider the following 359-residue polypeptide: Probably inactive receptor-like protein kinase At5g41680 (359 aa).

Residues 59–357 form the Protein kinase domain; the sequence is AASAEILGKG…KLIQDIPTNF (299 aa). ATP is bound by residues 65–73 and lysine 87; that span reads LGKGAHVTT.

It belongs to the protein kinase superfamily. Ser/Thr protein kinase family.

The polypeptide is Probably inactive receptor-like protein kinase At5g41680 (Arabidopsis thaliana (Mouse-ear cress)).